Consider the following 390-residue polypeptide: NADH-quinone oxidoreductase subunit D (390 aa).

The protein belongs to the complex I 49 kDa subunit family. In terms of assembly, NDH-1 is composed of 14 different subunits. Subunits NuoB, C, D, E, F, and G constitute the peripheral sector of the complex.

The protein localises to the cell inner membrane. The enzyme catalyses a quinone + NADH + 5 H(+)(in) = a quinol + NAD(+) + 4 H(+)(out). Functionally, NDH-1 shuttles electrons from NADH, via FMN and iron-sulfur (Fe-S) centers, to quinones in the respiratory chain. The immediate electron acceptor for the enzyme in this species is believed to be ubiquinone. Couples the redox reaction to proton translocation (for every two electrons transferred, four hydrogen ions are translocated across the cytoplasmic membrane), and thus conserves the redox energy in a proton gradient. The chain is NADH-quinone oxidoreductase subunit D from Trichlorobacter lovleyi (strain ATCC BAA-1151 / DSM 17278 / SZ) (Geobacter lovleyi).